The primary structure comprises 331 residues: Nucleotide sugar transporter SLC35B4 (331 aa).

A run of 11 helical transmembrane segments spans residues 4 to 24 (ALAV…LELL), 30 to 50 (GCGN…GFLF), 59 to 79 (PAIP…VSVV), 92 to 112 (LHMI…IIIL), 117 to 137 (SIFK…CTFM), 153 to 173 (GFQA…ALLM), 201 to 221 (ALPL…AVLF), 229 to 249 (IPGI…NIIT), 251 to 267 (YVCI…CASL), 268 to 288 (TVTL…ILYF), and 291 to 311 (PFTL…LMYT). Residues 326 to 331 (KDNKKN) carry the Mediates endoplasmic reticulum retention motif.

Belongs to the nucleotide-sugar transporter family. SLC35B subfamily.

The protein localises to the endoplasmic reticulum membrane. It carries out the reaction UDP-N-acetyl-alpha-D-glucosamine(in) + UDP-alpha-D-glucuronate(out) = UDP-N-acetyl-alpha-D-glucosamine(out) + UDP-alpha-D-glucuronate(in). The catalysed reaction is UDP-alpha-D-xylose(in) + UDP-alpha-D-glucuronate(out) = UDP-alpha-D-xylose(out) + UDP-alpha-D-glucuronate(in). In terms of biological role, antiporter that transports nucleotide sugars across the endoplasmic reticulum (ER) membrane in exchange for another nucleotide sugar. May couple UDP-alpha-D-glucuronate (UDP-GlcA) or UDP-alpha-D-xylose (UDP-Xyl) efflux to UDP-alpha-D-glucuronate (UDP-GlcA) influx into the ER lumen, which in turn stimulates glucuronidation and excretion of endobiotics and xenobiotics. The chain is Nucleotide sugar transporter SLC35B4 (SLC35B4) from Macaca fascicularis (Crab-eating macaque).